Reading from the N-terminus, the 70-residue chain is DNA-directed RNA polymerase subunit omega (70 aa).

The protein belongs to the RNA polymerase subunit omega family. As to quaternary structure, the RNAP catalytic core consists of 2 alpha, 1 beta, 1 beta' and 1 omega subunit. When a sigma factor is associated with the core the holoenzyme is formed, which can initiate transcription.

The enzyme catalyses RNA(n) + a ribonucleoside 5'-triphosphate = RNA(n+1) + diphosphate. Its function is as follows. Promotes RNA polymerase assembly. Latches the N- and C-terminal regions of the beta' subunit thereby facilitating its interaction with the beta and alpha subunits. The polypeptide is DNA-directed RNA polymerase subunit omega (Staphylococcus haemolyticus (strain JCSC1435)).